The following is a 30-amino-acid chain: Putative cytochrome bd-II ubiquinol oxidase subunit AppX (30 aa).

A helical transmembrane segment spans residues 4–24; it reads LLWFVGILLMCSLSTLVLVWL.

Belongs to the cytochrome ubiquinol oxidase subunit X family. In terms of assembly, able to interact with CydA and CydB upon overexpression.

It is found in the cell inner membrane. Functionally, might be part of cytochrome bd-II oxidase (appB and appC). Able to restore reductant resistance to a cydX deletion mutant upon overexpression. CydX and this protein may have some functional overlap. This Escherichia coli (strain K12) protein is Putative cytochrome bd-II ubiquinol oxidase subunit AppX (appX).